Consider the following 633-residue polypeptide: Phospholipid--sterol O-acyltransferase (633 aa).

Residues 1 to 6 are Cytoplasmic-facing; the sequence is MGANSK. The chain crosses the membrane as a helical; Signal-anchor for type II membrane protein span at residues 7–29; sequence SVTASFTVIAVFFLICGGRTAVE. Residues 30–633 lie on the Lumenal side of the membrane; that stretch reads DETEFHGDYS…TSANMLLQYI (604 aa). Residue serine 195 is the Acyl-ester intermediate of the active site. Active-site charge relay system residues include aspartate 461 and histidine 505.

This sequence belongs to the AB hydrolase superfamily. Lipase family.

The protein localises to the microsome membrane. Functionally, involved in lipid catabolism. Essential for sterol esters biosynthesis in leaves and seeds, but not in flowers. Plays a role in controlling the free sterol content of leaves. Catalyzes the transacylation of acyl groups from phospholipids to a variety of different sterols. Prefers phosphatidylethanolamine over phosphatidylcholine as an acyl donor. Not active toward neutral lipids. Highly specific for position sn-2, which in plant lipids is essentially devoid of saturated acyl groups. Broad sterol specificity (cholesterol &gt; campesterol &gt; sitosterol &gt; stigmasterol), but no activity with lupeol or beta-amyrin. The sequence is that of Phospholipid--sterol O-acyltransferase (PSAT) from Arabidopsis thaliana (Mouse-ear cress).